The following is an 864-amino-acid chain: Leucine--tRNA ligase (864 aa).

A 'HIGH' region motif is present at residues 42–52 (PYPSGKLHMGH). The 'KMSKS' region motif lies at 624–628 (KMSKS). Lys-627 lines the ATP pocket.

This sequence belongs to the class-I aminoacyl-tRNA synthetase family.

It localises to the cytoplasm. It catalyses the reaction tRNA(Leu) + L-leucine + ATP = L-leucyl-tRNA(Leu) + AMP + diphosphate. The chain is Leucine--tRNA ligase from Burkholderia ambifaria (strain ATCC BAA-244 / DSM 16087 / CCUG 44356 / LMG 19182 / AMMD) (Burkholderia cepacia (strain AMMD)).